We begin with the raw amino-acid sequence, 366 residues long: Melatonin receptor type 1A (366 aa).

At 1 to 45 the chain is on the extracellular side; that stretch reads MAGRLWGSPGGTPKGNGSSALLNVSQAAPGAGDGVRPRPSWLAAT. Asn16 and Asn23 each carry an N-linked (GlcNAc...) asparagine glycan. Residues 46 to 66 form a helical membrane-spanning segment; the sequence is LASILIFTIVVDIVGNLLVVL. At 67-79 the chain is on the cytoplasmic side; that stretch reads SVYRNKKLRNAGN. Residues 80–100 traverse the membrane as a helical segment; it reads VFVVSLAVADLLVAVYPYPLA. Residues 101-118 lie on the Extracellular side of the membrane; sequence LASIVNNGWSLSSLHCQL. A disulfide bond links Cys116 and Cys193. Residues 119–139 traverse the membrane as a helical segment; sequence SGFLMGLSVIGSVFSITGIAI. Topologically, residues 140 to 158 are cytoplasmic; sequence NRYCCICHSLRYGKLYSGT. A helical transmembrane segment spans residues 159–179; the sequence is NSLCYVFLIWTLTLVAIVPNL. Over 180-203 the chain is Extracellular; that stretch reads CVGTLQYDPRIYSCTFTQSVSSAY. Residues 204 to 224 form a helical membrane-spanning segment; the sequence is TIAVVVFHFIVPMLVVVFCYL. Topologically, residues 225 to 256 are cytoplasmic; the sequence is RIWALVLQVRWKVKPDNKPKLKPQDFRNFVTM. Residues 257-277 traverse the membrane as a helical segment; sequence FVVFVLFAICWAPLNFIGLVV. The Extracellular portion of the chain corresponds to 278–290; the sequence is ASDPASMAPRIPE. The chain crosses the membrane as a helical span at residues 291–311; that stretch reads WLFVASYYMAYFNSCLNAIIY. Over 312-366 the chain is Cytoplasmic; it reads GLLNQNFRQEYRKIIVSLCTTKMFFVDSSNHVADRIKRKPSPLIANHNLIKVDSV.

Belongs to the G-protein coupled receptor 1 family.

Its subcellular location is the cell membrane. Functionally, high affinity receptor for melatonin. Likely to mediate the reproductive and circadian actions of melatonin. The activity of this receptor is mediated by pertussis toxin sensitive G proteins that inhibit adenylate cyclase activity. Possibly involved in sleep induction, by melatonin activation of the potassium channel KCNMA1/BK and the dissociation of G-beta and G-gamma subunits, thereby decreasing synaptic transmission. The sequence is that of Melatonin receptor type 1A (MTNR1A) from Ovis aries (Sheep).